The sequence spans 535 residues: Methylmalonate-semialdehyde/malonate-semialdehyde dehydrogenase [acylating], mitochondrial (535 aa).

A mitochondrion-targeting transit peptide spans 1-32; sequence MAAAVAAAAAMRSRILQVSSKVNATWYPASSF. N6-acetyllysine; alternate is present on residues Lys47, Lys52, Lys55, and Lys76. Lys47, Lys52, Lys55, and Lys76 each carry N6-succinyllysine; alternate. Residue Lys87 is modified to N6-acetyllysine. 2 positions are modified to N6-acetyllysine; alternate: Lys117 and Lys129. An N6-succinyllysine; alternate mark is found at Lys117 and Lys129. Residues Ala183, Phe185, Lys209, Glu212, Arg213, and Ser262 each coordinate NAD(+). Ser262 is subject to Phosphoserine. At Lys298 the chain carries N6-acetyllysine. The active-site Nucleophile is the Cys317. 2 positions are modified to N6-acetyllysine: Lys330 and Lys331. Lys364 and Lys376 each carry N6-acetyllysine; alternate. An N6-succinyllysine; alternate mark is found at Lys364 and Lys376. Residue Ser380 is modified to Phosphoserine. Lys391 is modified (N6-succinyllysine). Glu417 contacts NAD(+). The residue at position 500 (Lys500) is an N6-acetyllysine. Lys517 bears the N6-succinyllysine mark.

It belongs to the aldehyde dehydrogenase family. In terms of assembly, homotetramer. In terms of processing, acetylation of Lys-55; Lys-117 and Lys-331 is observed in liver mitochondria from fasted mice but not from fed mice.

The protein resides in the mitochondrion. It catalyses the reaction 3-oxopropanoate + NAD(+) + CoA + H2O = hydrogencarbonate + acetyl-CoA + NADH + H(+). The catalysed reaction is 2-methyl-3-oxopropanoate + NAD(+) + CoA + H2O = propanoyl-CoA + hydrogencarbonate + NADH + H(+). It carries out the reaction (R)-2-methyl-3-oxopropanoate + NAD(+) + CoA + H2O = propanoyl-CoA + hydrogencarbonate + NADH + H(+). The enzyme catalyses (S)-2-methyl-3-oxopropanoate + NAD(+) + CoA + H2O = propanoyl-CoA + hydrogencarbonate + NADH + H(+). Functionally, malonate and methylmalonate semialdehyde dehydrogenase involved in the catabolism of valine, thymine, and compounds catabolized by way of beta-alanine, including uracil and cytidine. The polypeptide is Methylmalonate-semialdehyde/malonate-semialdehyde dehydrogenase [acylating], mitochondrial (Mus musculus (Mouse)).